The chain runs to 273 residues: Protein E6 (273 aa).

2 zinc fingers span residues 27–63 (CIFC…CRDC) and 100–140 (CTVC…CSSC).

The protein belongs to the papillomaviridae E6 protein family. As to quaternary structure, forms homodimers. Interacts with ubiquitin-protein ligase UBE3A/E6-AP; this interaction stimulates UBE3A ubiquitin activity. Interacts with host BAK1.

The protein resides in the host cytoplasm. It is found in the host nucleus. Plays a major role in the induction and maintenance of cellular transformation. E6 associates with host UBE3A/E6-AP ubiquitin-protein ligase and modulates its activity. Protects host keratinocytes from apoptosis by mediating the degradation of host BAK1. May also inhibit host immune response. The sequence is that of Protein E6 from Sylvilagus floridanus (Cottontail rabbit).